Reading from the N-terminus, the 224-residue chain is Ribose-5-phosphate isomerase A (224 aa).

Substrate-binding positions include 26 to 29 (TGST), 82 to 85 (DGAD), and 95 to 98 (KGGG). E104 acts as the Proton acceptor in catalysis. A substrate-binding site is contributed by K122.

It belongs to the ribose 5-phosphate isomerase family. As to quaternary structure, homodimer.

The catalysed reaction is aldehydo-D-ribose 5-phosphate = D-ribulose 5-phosphate. The protein operates within carbohydrate degradation; pentose phosphate pathway; D-ribose 5-phosphate from D-ribulose 5-phosphate (non-oxidative stage): step 1/1. Its function is as follows. Catalyzes the reversible conversion of ribose-5-phosphate to ribulose 5-phosphate. This chain is Ribose-5-phosphate isomerase A, found in Lactococcus lactis subsp. cremoris (strain SK11).